We begin with the raw amino-acid sequence, 354 residues long: Serum paraoxonase/arylesterase 2 (354 aa).

An intrachain disulfide couples C42 to C352. Residues D53 and D54 each contribute to the Ca(2+) site. Catalysis depends on H114, which acts as the Proton acceptor. 4 residues coordinate Ca(2+): I116, N167, D168, and N223. An N-linked (GlcNAc...) asparagine glycan is attached at N254. Ca(2+)-binding residues include D268 and N269. N-linked (GlcNAc...) asparagine glycosylation is found at N269 and N323.

Belongs to the paraoxonase family. As to quaternary structure, homotrimer. Ca(2+) is required as a cofactor. Glycosylated. Post-translationally, the signal sequence is not cleaved.

It localises to the membrane. The catalysed reaction is a phenyl acetate + H2O = a phenol + acetate + H(+). It catalyses the reaction an N-acyl-L-homoserine lactone + H2O = an N-acyl-L-homoserine + H(+). In terms of biological role, capable of hydrolyzing lactones and a number of aromatic carboxylic acid esters. The protein is Serum paraoxonase/arylesterase 2 (PON2) of Canis lupus familiaris (Dog).